Consider the following 365-residue polypeptide: c-di-GMP synthase (365 aa).

It belongs to the CD-NTase family. E subfamily.

It catalyses the reaction 2 GTP = 3',3'-c-di-GMP + 2 diphosphate. Its function is as follows. Cyclic nucleotide synthase (second messenger synthase) of a CBASS antivirus system. CBASS (cyclic oligonucleotide-based antiphage signaling system) provides immunity against bacteriophage. The CD-NTase protein synthesizes cyclic nucleotides in response to infection; these serve as specific second messenger signals. The signals activate a diverse range of effectors, leading to bacterial cell death and thus abortive phage infection. A type I-D(GG) CBASS system. In terms of biological role, cyclic dinucleotide synthase that catalyzes the synthesis of c-di-GMP, has no activity with other NTP substrates. The sequence is that of c-di-GMP synthase from Flavobacteriaceae sp. genome_bin_11.